The following is a 450-amino-acid chain: GSASAPSIFPLVSCENSNPTSTVAMGCLARDFLPGSITFSWKYEBLSAINSTRGFPSVLRGGKYVATSQVFLPSVDIIQGTDEHIVCKVRHSBGBKQKBVPLPVMLTLPPEVSGFIPPRDAFFGBPRKSQLICQASGFSPRQVWSLRDGKQIESGVTTNEVZAZAKZSGPTTYKVTSMLTIQEDAWLSQSVFTCKVEHRGLTFQQNASSMCTSDQPVGISIFTIPPSFASIFNTKSAKLSCLVTDLATYDSVTISWTREENGALKTHTNISESHPNGTFSAMGEATVCVEEWESGEQFTCTVTHTDLPSVLKQTISRPKGVAVHMPSVYVLPPSREQLDLRESATLSCLVTGYSPPDVFVQWVQKGQPVPPDSYVTSAPMPEPQAPGLYFAHSILTVSEEEWNAGETYTCVVAHESLPNRVTERSVDKSTGKPTLYNVSLVLSDTAGZCY.

This is Ig mu chain C region from Canis lupus familiaris (Dog).